The sequence spans 500 residues: Glycerol kinase (500 aa).

T13 contributes to the ADP binding site. Residues T13, T14, and S15 each coordinate ATP. A sn-glycerol 3-phosphate-binding site is contributed by T13. R17 is an ADP binding site. Sn-glycerol 3-phosphate-binding residues include R83, E84, Y135, and D244. Residues R83, E84, Y135, D244, and Q245 each coordinate glycerol. T266 and G309 together coordinate ADP. T266, G309, Q313, and G410 together coordinate ATP. Residues G410 and N414 each contribute to the ADP site.

The protein belongs to the FGGY kinase family.

It carries out the reaction glycerol + ATP = sn-glycerol 3-phosphate + ADP + H(+). It functions in the pathway polyol metabolism; glycerol degradation via glycerol kinase pathway; sn-glycerol 3-phosphate from glycerol: step 1/1. Its activity is regulated as follows. Inhibited by fructose 1,6-bisphosphate (FBP). Its function is as follows. Key enzyme in the regulation of glycerol uptake and metabolism. Catalyzes the phosphorylation of glycerol to yield sn-glycerol 3-phosphate. The protein is Glycerol kinase of Burkholderia ambifaria (strain MC40-6).